We begin with the raw amino-acid sequence, 67 residues long: Large ribosomal subunit protein uL29c (67 aa).

Belongs to the universal ribosomal protein uL29 family.

The protein localises to the plastid. It localises to the chloroplast. The polypeptide is Large ribosomal subunit protein uL29c (rpl29) (Porphyra purpurea (Red seaweed)).